A 254-amino-acid polypeptide reads, in one-letter code: Proteasome subunit alpha type-7 (254 aa).

An O-linked (GlcNAc) serine glycan is attached at S136. A Phosphotyrosine modification is found at Y159. At K233 the chain carries N6-acetyllysine.

Belongs to the peptidase T1A family. In terms of assembly, the 26S proteasome consists of a 20S proteasome core and two 19S regulatory subunits. The 20S proteasome core is a barrel-shaped complex made of 28 subunits that are arranged in four stacked rings. The two outer rings are each formed by seven alpha subunits, and the two inner rings are formed by seven beta subunits. The proteolytic activity is exerted by three beta-subunits PSMB5, PSMB6 and PSMB7. PSMA7 interacts directly with the PSMG1-PSMG2 heterodimer which promotes 20S proteasome assembly. Interacts with HIF1A. Interacts with RAB7A. Interacts with PRKN. Interacts with ABL1 and ABL2. Interacts with EMAP2. Interacts with MAVS. As to expression, ubiquitous.

Its subcellular location is the cytoplasm. It is found in the nucleus. Its function is as follows. Component of the 20S core proteasome complex involved in the proteolytic degradation of most intracellular proteins. This complex plays numerous essential roles within the cell by associating with different regulatory particles. Associated with two 19S regulatory particles, forms the 26S proteasome and thus participates in the ATP-dependent degradation of ubiquitinated proteins. The 26S proteasome plays a key role in the maintenance of protein homeostasis by removing misfolded or damaged proteins that could impair cellular functions, and by removing proteins whose functions are no longer required. Associated with the PA200 or PA28, the 20S proteasome mediates ubiquitin-independent protein degradation. This type of proteolysis is required in several pathways including spermatogenesis (20S-PA200 complex) or generation of a subset of MHC class I-presented antigenic peptides (20S-PA28 complex). Inhibits the transactivation function of HIF-1A under both normoxic and hypoxia-mimicking conditions. The interaction with EMAP2 increases the proteasome-mediated HIF-1A degradation under the hypoxic conditions. Plays a role in hepatitis C virus internal ribosome entry site-mediated translation. Mediates nuclear translocation of the androgen receptor (AR) and thereby enhances androgen-mediated transactivation. Promotes MAVS degradation and thereby negatively regulates MAVS-mediated innate immune response. This Rattus norvegicus (Rat) protein is Proteasome subunit alpha type-7 (Psma7).